The following is a 2472-amino-acid chain: Nuclear receptor corepressor 2 (2472 aa).

Disordered stretches follow at residues 1–20, 47–168, and 190–220; these read MSGS…PRYP, RDYT…SRLS, and ISKL…PPIE. Arginine 18 carries the asymmetric dimethylarginine modification. Over residues 51 to 60 the composition is skewed to polar residues; sequence SHLSPGSIIQ. Phosphoserine is present on residues serine 54 and serine 67. Composition is skewed to basic and acidic residues over residues 78–88 and 96–112; these read RSQELHLRPES and GKPD…RLEL. A phosphoserine mark is found at serine 149 and serine 152. The stretch at 165–207 forms a coiled coil; the sequence is SRLSKEELIQNMDRVDREITMVEQQISKLKKKQQQLEEEAAKP. The segment covering 203–212 has biased composition (basic and acidic residues); the sequence is EAAKPPEPEK. The residue at position 215 (serine 215) is a Phosphoserine. An interaction with SIN3A/B region spans residues 254–312; sequence LPLYNQPSDTRQYHENIKINQAMRKKLILYFKRRNHARKQWEQRFCQRYDQLMEAWEKK. Residues 389–480 form a deacetylase activation domain (DAD) region; it reads MRQLAVIPPM…YLTKKNENYK (92 aa). An SANT 1 domain is found at 427 to 478; the sequence is QVTNMWSEQERDTFREKFMQHPKNFGLIASFLERKTVAECVLYYYLTKKNEN. Residues lysine 449, tyrosine 470, and tyrosine 471 each coordinate 1D-myo-inositol 1,4,5,6-tetrakisphosphate. Disordered regions lie at residues 487-618, 665-1107, and 1173-1197; these read YRRR…EMET, HKLK…RPPI, and SATS…YRGS. The stretch at 492–560 forms a coiled coil; that stretch reads KSQQQQQQQQ…GEDNDEKEAV (69 aa). Serine 493 carries the phosphoserine modification. The span at 494–507 shows a compositional bias: low complexity; the sequence is QQQQQQQQQQQQQQ. The segment covering 512–548 has biased composition (basic and acidic residues); that stretch reads SQEEKEEKEKEKEADKEEEKQDAENEKEELSKEKTDD. Threonine 549 is subject to Phosphothreonine. The residue at position 550 (serine 550) is a Phosphoserine. A compositionally biased stretch (polar residues) spans 592-609; that stretch reads ATPQQSSELASMEMNESS. Residues 606 to 657 enclose the SANT 2 domain; it reads NESSRWTEEEMETAKKGLLEHGRNWSAIARMVGSKTVSQCKNFYFNYKKRQN. A coiled-coil region spans residues 658–682; the sequence is LDEILQQHKLKMEKERNARRKKKKT. The segment covering 709-718 has biased composition (acidic residues); it reads NEEELAEEAE. Polar residues predominate over residues 739–750; it reads VNNSSDTESVPS. A phosphoserine mark is found at serine 747 and serine 750. Composition is skewed to pro residues over residues 773–782 and 789–811; these read TQPPVPPPEE and EPSP…PAAP. 2 stretches are compositionally biased toward basic and acidic residues: residues 831–850 and 859–868; these read EDAK…KPEE and ESVKSDHKEE. At lysine 878 the chain carries N6-acetyllysine. A compositionally biased stretch (low complexity) spans 905–919; sequence GSSSGATQDSDSSAT. The residue at position 938 (serine 938) is a Phosphoserine. Threonine 945 is subject to Phosphothreonine. Serine 955 carries the post-translational modification Phosphoserine. Lysine 958 is modified (N6-acetyllysine). Residues 978–988 show a composition bias toward basic and acidic residues; that stretch reads KVHEPPREDTV. The span at 989-1000 shows a compositional bias: pro residues; the sequence is PPKPVPPVPPPT. Over residues 1090–1101 the composition is skewed to low complexity; sequence LPLGLHDSARPV. Lysine 1181 and lysine 1209 each carry N6-acetyllysine. Serine 1220 carries the phosphoserine modification. 3 disordered regions span residues 1254–1277, 1345–1378, and 1410–1443; these read SVSQ…AAPK, LKRE…LKLK, and PLAP…KHDV. A Phosphothreonine modification is found at threonine 1350. Basic and acidic residues predominate over residues 1359–1368; sequence DLTETYKPRP. Phosphoserine occurs at positions 1449, 1509, and 1565. The tract at residues 1479–1578 is disordered; it reads KSRSGTSSGA…TVPEHHPHPI (100 aa). Arginine 1624 carries the asymmetric dimethylarginine modification. Positions 1734–1826 are disordered; it reads TAPPPFSSRH…PISPRTQDAL (93 aa). The span at 1740-1753 shows a compositional bias: low complexity; that stretch reads SSRHSSSPLSPGGP. Phosphoserine occurs at positions 1746 and 1749. Residues 1765–1778 show a composition bias toward basic and acidic residues; the sequence is SERERERERERDKS. Polar residues predominate over residues 1807–1826; sequence RPASHTHQHSPISPRTQDAL. Residue serine 1819 is modified to Phosphoserine. An Omega-N-methylarginine modification is found at arginine 1854. Disordered regions lie at residues 1857–1878, 1898–1986, and 2001–2078; these read RSTS…THCP, KETS…KPFS, and AGYS…LQTA. A compositionally biased stretch (basic and acidic residues) spans 1899–1913; the sequence is ETSRVARPERPRVDA. N6-acetyllysine is present on lysine 1920. A compositionally biased stretch (low complexity) spans 1925–1938; it reads EPASSPSKSSEPRS. Position 1963 is a phosphoserine (serine 1963). Position 1983 is an N6-acetyllysine (lysine 1983). Phosphoserine is present on residues serine 2004, serine 2012, serine 2015, serine 2016, and serine 2018. A Phosphothreonine modification is found at threonine 2020. A compositionally biased stretch (basic and acidic residues) spans 2020–2043; sequence THDKGLSKPLEELEKSHLEGELRH. Residue serine 2035 is modified to Phosphoserine. The span at 2064–2075 shows a compositional bias: low complexity; it reads LPESQPSSSPLL. Residues 2086–2090 form a required for interaction with RARA in the absence of its ligand region; that stretch reads RVVTL. The short motif at 2094–2098 is the CORNR box of ID1 element; it reads ISEVI. The segment at 2132-2226 is disordered; it reads RRPPSDLYLP…GNTSQPPAFF (95 aa). Phosphoserine is present on residues serine 2161, serine 2181, and serine 2215. The CORNR box of ID2 motif lies at 2296-2300; the sequence is LEAII. The tract at residues 2343–2459 is disordered; it reads GRSDHALTSP…HHAWDEEPKP (117 aa). At serine 2371 the chain carries Phosphoserine. The segment covering 2439-2450 has biased composition (low complexity); sequence LAAGSGPLAGPH.

The protein belongs to the N-CoR nuclear receptor corepressors family. As to quaternary structure, forms a large corepressor complex that contains SIN3A/B and histone deacetylases HDAC1 and HDAC2. This complex associates with the thyroid (TR) and the retinoid acid receptors (RAR) in the absence of ligand, and may stabilize their interaction with TFIIB. Interacts directly with RARA in the absence of ligand; the interaction represses RARA activity. Interacts (isoform SMRT) with HDAC10. Interacts with MINT. Component of the N-Cor repressor complex, at least composed of NCOR1, NCOR2, HDAC3, TBL1X, TBL1R, CORO2A and GPS2. Interacts with CBFA2T3 and ATXN1L. Interacts with RARB; the interaction is weak and does not repress RARB transactivational activity. Interacts (via 1D-myo-inositol 1,4,5,6-tetrakisphosphate) with HDAC3; promoting the histone deacetylase activity of HDAC3. Interacts with HDAC7 and C1D. Interacts with NR4A2; this interaction increases in the absence of PITX3. Interacts with BCL6 (via the BTB domain), required for BCL6 transcriptional repressor activity on a subset of target genes. Forms ternary complexes with BCOR and BCL6 on target gene promoters but, on enhancer elements, interacts with BCL6 and HDAC3 to repress proximal gene expression. May interact with DEAF1. Interacts with RXRA. Interacts with MECP2. Interacts with ZBTB7A. Interacts with AR. Interacts with TBL1Y. Interacts with SANBR (via the BTB domain). Ubiquitous. Also widely expressed in early embryos.

Its subcellular location is the nucleus. Transcriptional corepressor that mediates the transcriptional repression activity of some nuclear receptors by promoting chromatin condensation, thus preventing access of the basal transcription. Acts by recruiting chromatin modifiers, such as histone deacetylases HDAC1, HDAC2 and HDAC3. Required to activate the histone deacetylase activity of HDAC3. Involved in the regulation BCL6-dependent of the germinal center (GC) reactions, mainly through the control of the GC B-cells proliferation and survival. Recruited by ZBTB7A to the androgen response elements/ARE on target genes, negatively regulates androgen receptor signaling and androgen-induced cell proliferation. The polypeptide is Nuclear receptor corepressor 2 (Ncor2) (Mus musculus (Mouse)).